We begin with the raw amino-acid sequence, 172 residues long: Pollen-specific protein-like At4g18596 (172 aa).

The signal sequence occupies residues 1 to 27; sequence MASKAIFFFFVSAVCLSSLAGVAIADA. Cystine bridges form between C41/C112, C44/C157, and C65/C100. N70 carries N-linked (GlcNAc...) asparagine glycosylation.

The protein belongs to the Ole e I family.

The protein localises to the secreted. In Arabidopsis thaliana (Mouse-ear cress), this protein is Pollen-specific protein-like At4g18596.